The primary structure comprises 491 residues: Serine/threonine-protein phosphatase 2A regulatory subunit B'' subunit delta (491 aa).

The 36-residue stretch at 331-366 (TTPTSTEYWFRCMDLDGDGALSMFELEFFYEEQAQR) folds into the EF-hand domain. Ca(2+) is bound by residues aspartate 344, aspartate 346, aspartate 348, and glutamate 355. Composition is skewed to acidic residues over residues 460–473 (AMAE…EGSD) and 481–491 (ADEDCDDLEPL). The segment at 460 to 491 (AMAEDDDDHDEGSDPIDLYGLADEDCDDLEPL) is disordered.

In terms of assembly, PP2A consists of a common heterodimeric core enzyme, composed of a 36 kDa catalytic subunit (subunit C) and a 65 kDa constant regulatory subunit (PR65 or subunit A), that associates with a variety of regulatory subunits. Proteins that associate with the core dimer include three families of regulatory subunits B (the R2/B/PR55/B55, R3/B''/PR72/PR130/PR59 and R5/B'/B56 families), the 48 kDa variable regulatory subunit, viral proteins, and cell signaling molecules. Expressed in testis, kidney, liver, lung, spleen, brain and heart.

The B regulatory subunit might modulate substrate selectivity and catalytic activity, and might also direct the localization of the catalytic enzyme to a particular subcellular compartment. Interacts with retinoblastoma-related protein p107 (in vivo). May target PP2A core dimer to p107 resulting in dephosphorylation of p107. The polypeptide is Serine/threonine-protein phosphatase 2A regulatory subunit B'' subunit delta (Ppp2r3d) (Mus musculus (Mouse)).